The chain runs to 518 residues: Squalene monooxygenase 1,2 (518 aa).

Helical transmembrane passes span 3 to 23 (MAFV…WTIF) and 48 to 68 (GPDV…YALA). Residues 58-59 (VG), 78-79 (ER), Arg86, Phe91, Arg158, Val174, Asp337, and Met350 each bind FAD. A helical transmembrane segment spans residues 448 to 468 (LFYHLFVISLSSIGQLLSPFP).

Belongs to the squalene monooxygenase family. The cofactor is FAD.

It localises to the membrane. It carries out the reaction squalene + reduced [NADPH--hemoprotein reductase] + O2 = (S)-2,3-epoxysqualene + oxidized [NADPH--hemoprotein reductase] + H2O + H(+). It participates in terpene metabolism; lanosterol biosynthesis; lanosterol from farnesyl diphosphate: step 2/3. Catalyzes the stereospecific oxidation of squalene to (S)-2,3-epoxysqualene, and is considered to be a rate-limiting enzyme in steroid biosynthesis. The chain is Squalene monooxygenase 1,2 (SQP1,2) from Brassica napus (Rape).